We begin with the raw amino-acid sequence, 86 residues long: Cell division topological specificity factor (86 aa).

The protein belongs to the MinE family.

Prevents the cell division inhibition by proteins MinC and MinD at internal division sites while permitting inhibition at polar sites. This ensures cell division at the proper site by restricting the formation of a division septum at the midpoint of the long axis of the cell. In Shewanella frigidimarina (strain NCIMB 400), this protein is Cell division topological specificity factor.